The primary structure comprises 388 residues: UPF0496 protein 1 (388 aa).

The segment at Met1–Ala25 is disordered. Positions Gln198–Ala227 form a coiled coil. A run of 2 helical transmembrane segments spans residues Ile234–Ala254 and Pro257–Ile277. Residues Val344 to Arg376 are a coiled coil.

Belongs to the UPF0496 family.

Its subcellular location is the membrane. In Oryza sativa subsp. japonica (Rice), this protein is UPF0496 protein 1.